The following is a 292-amino-acid chain: Mycothiol acetyltransferase (292 aa).

N-acetyltransferase domains lie at 13–168 (ALDR…KWLQ) and 159–292 (KSVA…VYEK). Glutamate 40 lines the 1D-myo-inositol 2-(L-cysteinylamino)-2-deoxy-alpha-D-glucopyranoside pocket. An acetyl-CoA-binding site is contributed by 77-79 (LAV). The 1D-myo-inositol 2-(L-cysteinylamino)-2-deoxy-alpha-D-glucopyranoside site is built by glutamate 179, lysine 218, and glutamate 226. Residues 230-232 (VGL) and 237-243 (RGRGLGD) each bind acetyl-CoA. 1D-myo-inositol 2-(L-cysteinylamino)-2-deoxy-alpha-D-glucopyranoside is bound at residue tyrosine 264.

It belongs to the acetyltransferase family. MshD subfamily. In terms of assembly, monomer.

The catalysed reaction is 1D-myo-inositol 2-(L-cysteinylamino)-2-deoxy-alpha-D-glucopyranoside + acetyl-CoA = mycothiol + CoA + H(+). In terms of biological role, catalyzes the transfer of acetyl from acetyl-CoA to desacetylmycothiol (Cys-GlcN-Ins) to form mycothiol. This is Mycothiol acetyltransferase from Corynebacterium glutamicum (strain ATCC 13032 / DSM 20300 / JCM 1318 / BCRC 11384 / CCUG 27702 / LMG 3730 / NBRC 12168 / NCIMB 10025 / NRRL B-2784 / 534).